A 163-amino-acid polypeptide reads, in one-letter code: NADPH-dependent 7-cyano-7-deazaguanine reductase (163 aa).

The span at 1 to 10 (MSKPPRRSPR) shows a compositional bias: basic residues. The tract at residues 1 to 23 (MSKPPRRSPRKPTPASPELQLGH) is disordered. Cys-61 (thioimide intermediate) is an active-site residue. The active-site Proton donor is the Asp-68. Residues 83–85 (LES) and 102–103 (HE) contribute to the substrate site.

The protein belongs to the GTP cyclohydrolase I family. QueF type 1 subfamily.

It localises to the cytoplasm. It catalyses the reaction 7-aminomethyl-7-carbaguanine + 2 NADP(+) = 7-cyano-7-deazaguanine + 2 NADPH + 3 H(+). It functions in the pathway tRNA modification; tRNA-queuosine biosynthesis. Its function is as follows. Catalyzes the NADPH-dependent reduction of 7-cyano-7-deazaguanine (preQ0) to 7-aminomethyl-7-deazaguanine (preQ1). This is NADPH-dependent 7-cyano-7-deazaguanine reductase from Rhodopseudomonas palustris (strain BisA53).